We begin with the raw amino-acid sequence, 332 residues long: Fructose-1,6-bisphosphatase class 1 (332 aa).

Positions 89, 110, 112, and 113 each coordinate Mg(2+). Residues 113–116 (DGSS), Asn206, Tyr239, 257–259 (YLY), and Lys269 each bind substrate. Glu275 provides a ligand contact to Mg(2+).

It belongs to the FBPase class 1 family. As to quaternary structure, homotetramer. It depends on Mg(2+) as a cofactor.

It localises to the cytoplasm. It catalyses the reaction beta-D-fructose 1,6-bisphosphate + H2O = beta-D-fructose 6-phosphate + phosphate. It participates in carbohydrate biosynthesis; gluconeogenesis. The polypeptide is Fructose-1,6-bisphosphatase class 1 (Salmonella arizonae (strain ATCC BAA-731 / CDC346-86 / RSK2980)).